The sequence spans 297 residues: Pyridoxal 5'-phosphate synthase subunit SNZ1 (297 aa).

Aspartate 23 lines the D-ribose 5-phosphate pocket. Lysine 80 serves as the catalytic Schiff-base intermediate with D-ribose 5-phosphate. Position 152 (glycine 152) interacts with D-ribose 5-phosphate. Arginine 164 contacts D-glyceraldehyde 3-phosphate. D-ribose 5-phosphate-binding positions include glycine 214 and 235-236; that span reads GS.

The protein belongs to the PdxS/SNZ family. Homohexamer. Interacts with AIM18.

It carries out the reaction aldehydo-D-ribose 5-phosphate + D-glyceraldehyde 3-phosphate + L-glutamine = pyridoxal 5'-phosphate + L-glutamate + phosphate + 3 H2O + H(+). The protein operates within cofactor biosynthesis; pyridoxal 5'-phosphate biosynthesis. Its function is as follows. Catalyzes the formation of pyridoxal 5'-phosphate from ribose 5-phosphate (RBP), glyceraldehyde 3-phosphate (G3P) and ammonia. The ammonia is provided by a SNO isoform. Can also use ribulose 5-phosphate and dihydroxyacetone phosphate as substrates, resulting from enzyme-catalyzed isomerization of RBP and G3P, respectively. This chain is Pyridoxal 5'-phosphate synthase subunit SNZ1 (SNZ1), found in Saccharomyces cerevisiae (strain ATCC 204508 / S288c) (Baker's yeast).